A 138-amino-acid chain; its full sequence is RuBisCO chaperone RbcX (138 aa).

A disordered region spans residues 118–138 (VDNFPSETSNGESNNNDSPPS). The span at 122 to 138 (PSETSNGESNNNDSPPS) shows a compositional bias: polar residues.

It belongs to the RbcX family. Homodimer. Interacts with the exposed C-terminal peptide of RbcL via its central cleft, contacts a second RbcL monomer via its peripheral polar surface.

Its subcellular location is the carboxysome. It is found in the cytoplasm. An RbcL-specific chaperone. The central cleft of the RbcX homodimer (RbcX2) binds the C-terminus of an RbcL monomer, stabilizing the C-terminus and probably preventing its reassociation with chaperonin GroEL-ES. At the same time the peripheral region of RbcX2 binds a second RbcL monomer, bridging the RbcL homodimers in the correct orientation. The RbcX2(2)-bound RbcL dimers then assemble into the RbcL8 core (RbcL8-(RbcX2)8). RbcS binding triggers the release of RbcX2. This chain is RuBisCO chaperone RbcX, found in Synechocystis sp. (strain ATCC 27184 / PCC 6803 / Kazusa).